Here is a 325-residue protein sequence, read N- to C-terminus: Centromere protein O (325 aa).

Positions 1–35 (MEEERNSDEKENALCGRSLTAASRDGGGRMPAAPL) are disordered. A coiled-coil region spans residues 55-112 (LEMLEAQAHELGLKQEEKEQQEKKLDRLKARVQELRARRDELRAKVELQEKRLLDKEG).

This sequence belongs to the CENP-O/MCM21 family. In terms of assembly, component of the CENPA-HI complex, at least composed of CENPH, CENPI, CENPK, CENPL, CENPM, CENPO and CENPP. Component of a discrete complex composed of at least CENPO, CENPP, CENPQ, CENPR and CENPU.

The protein resides in the nucleus. It localises to the chromosome. The protein localises to the centromere. Its function is as follows. Component of the CENPA-HI complex, a centromeric complex involved in assembly of kinetochore proteins, mitotic progression and chromosome segregation. Involved in kinetochore assembly and required for recovery from spindle damage. In Gallus gallus (Chicken), this protein is Centromere protein O (CENPO).